A 225-amino-acid polypeptide reads, in one-letter code: MNGIRDVVKEEQPRERLLLEGAGSLSNRELLAVLLRTGSKEETVLKLSDKILHHFDGLRMLKDATLEELVSIHGVGVAKATQLIAAFELGRRMVRLEYQNRYSIRSPEDCATYMMEEMRFLQQEHFVCLYLNTKNQVIHRQTIFIGSLNSSIVHPREVFKEAFRRAAASIICLHNHPSGDPAPSREDIEVTKRLVECGRIIGIEVLDHIIIGDHKFVSLKEKGHI.

Residues 103–225 form the MPN domain; that stretch reads SIRSPEDCAT…FVSLKEKGHI (123 aa). H174, H176, and D187 together coordinate Zn(2+). The JAMM motif motif lies at 174–187; that stretch reads HNHPSGDPAPSRED.

It belongs to the UPF0758 family.

This chain is UPF0758 protein BCE_4545, found in Bacillus cereus (strain ATCC 10987 / NRS 248).